The primary structure comprises 213 residues: Peroxynitrite isomerase 2 (213 aa).

A GXWXGXG motif is present at residues 58 to 64 (GVWRGEG). The heme b site is built by K176 and H203.

Belongs to the nitrobindin family. Homodimer. Heme b is required as a cofactor.

It catalyses the reaction peroxynitrite = nitrate. The protein operates within nitrogen metabolism. Functionally, heme-binding protein able to scavenge peroxynitrite and to protect free L-tyrosine against peroxynitrite-mediated nitration, by acting as a peroxynitrite isomerase that converts peroxynitrite to nitrate. Therefore, this protein likely plays a role in peroxynitrite sensing and in the detoxification of reactive nitrogen and oxygen species (RNS and ROS, respectively). Is able to bind nitric oxide (NO) in vitro, but may act as a sensor of peroxynitrite levels in vivo. The sequence is that of Peroxynitrite isomerase 2 from Rhodococcus jostii (strain RHA1).